We begin with the raw amino-acid sequence, 469 residues long: Extracellular endo-alpha-(1-&gt;5)-L-arabinanase 2 (469 aa).

Residues 1–26 form the signal peptide; that stretch reads MFNRLFRVCFLAALIMAFTLPNSVYA. Aspartate 38 functions as the Proton acceptor in the catalytic mechanism. Substrate is bound by residues aspartate 38, aspartate 122, 168 to 171, 188 to 190, and 220 to 224; these read NVVD, SYS, and HSRIE. Residue glutamate 224 is the Proton donor of the active site. Residue histidine 318 participates in Ca(2+) binding.

It belongs to the glycosyl hydrolase 43 family. As to quaternary structure, homodimer. Ca(2+) is required as a cofactor.

The protein localises to the secreted. The catalysed reaction is Endohydrolysis of (1-&gt;5)-alpha-arabinofuranosidic linkages in (1-&gt;5)-arabinans.. The protein operates within glycan metabolism; L-arabinan degradation. Functionally, involved in the degradation of arabinan and is a key enzyme in the complete degradation of the plant cell wall. Catalyzes the internal cleavage of alpha-(1-&gt;5)-L-arabinofuranosyl residues of the alpha-1,5-L-arabinan to produce arabino-oligosaccharides and L-arabinose. It is also active toward linear branched sugar beet arabinan, and pectin from apple. The protein is Extracellular endo-alpha-(1-&gt;5)-L-arabinanase 2 (abn2) of Bacillus subtilis (strain 168).